The sequence spans 174 residues: RNA pyrophosphohydrolase (174 aa).

Residues 6–149 (GFRANVGIII…KRDVYRKVMK (144 aa)) enclose the Nudix hydrolase domain. The short motif at 38–59 (GGVDDGETAEEAMYRELYEEVG) is the Nudix box element.

The protein belongs to the Nudix hydrolase family. RppH subfamily. Requires a divalent metal cation as cofactor.

Accelerates the degradation of transcripts by removing pyrophosphate from the 5'-end of triphosphorylated RNA, leading to a more labile monophosphorylated state that can stimulate subsequent ribonuclease cleavage. The sequence is that of RNA pyrophosphohydrolase from Shewanella sp. (strain MR-7).